The chain runs to 363 residues: G kinase-anchoring protein 1-B (363 aa).

Disordered stretches follow at residues 17–79 (ALLK…RNLA) and 147–182 (VNGD…VPLK). Positions 50 to 79 (KTNVNEKKKEKRRKKKEQQQSEANELRNLA) form a coiled coil. Positions 160-170 (KVNKKDKRKNN) are enriched in basic residues. 2 coiled-coil regions span residues 249-298 (DGKT…QEGE) and 328-348 (AALE…VRYQ).

The protein belongs to the GKAP1 family.

Its subcellular location is the golgi apparatus. In terms of biological role, may play a role in the regulation of insulin-dependent IRS1 tyrosine phosphorylation in adipocytes. The protein is G kinase-anchoring protein 1-B (gkap1-b) of Xenopus laevis (African clawed frog).